Here is a 2000-residue protein sequence, read N- to C-terminus: Myosin-14 (2000 aa).

Ala-2 is subject to N-acetylalanine. Residue Thr-33 is modified to Phosphothreonine. The Myosin N-terminal SH3-like domain maps to 47 to 97 (TARRMVWVPSELHGFEAAALRDEGEEEAEVELAESGRRLRLPRDQIQRMNP). At Ser-56 the chain carries Phosphoserine. In terms of domain architecture, Myosin motor spans 101 to 804 (SKAEDMAELT…VLAQLEEERD (704 aa)). 194 to 201 (GESGAGKT) is a binding site for ATP. Residues 682-704 (LSRLMATLSNTNPSFVRCIVPNH) form an actin-binding region. Residues 807-836 (VTDIIVSFQAAARGYLARRAFQRRQQQQSA) form the IQ domain. The stretch at 866–1951 (LQVTRQDEVL…VTTLRNRLRR (1086 aa)) forms a coiled coil. Phosphoserine is present on Ser-925. Positions 1173–1197 (RGELEDTLDSTNAQQELRSKREQEV) are disordered. The residue at position 1198 (Thr-1198) is a Phosphothreonine. Residues Ser-1249 and Ser-1280 each carry the phosphoserine modification. Disordered regions lie at residues 1260-1311 (ELSS…AELE), 1597-1629 (HERDLQGRDDAGEERRRQLAKQLRDAEVERDEE), 1720-1751 (SDRARRQAQQDRDEMAEEVASGNLSKAATLEE), 1910-1942 (AEEEASRAQAGRRRLQRELEDVTESAESMNREV), and 1967-2000 (LEEGVASDEEEAEGAEPGSAPGQEPEAPPPATPQ). Residues 1290-1304 (SDSERARSEAAEKLQ) are compositionally biased toward basic and acidic residues. Positions 1720–1732 (SDRARRQAQQDRD) are enriched in basic and acidic residues. Over residues 1971–1980 (VASDEEEAEG) the composition is skewed to acidic residues. 2 positions are modified to phosphoserine: Ser-1973 and Ser-1985. Low complexity predominate over residues 1981 to 1991 (AEPGSAPGQEP). Thr-1998 bears the Phosphothreonine mark.

It belongs to the TRAFAC class myosin-kinesin ATPase superfamily. Myosin family. In terms of assembly, myosin is a hexameric protein that consists of 2 heavy chain subunits (MHC), 2 alkali light chain subunits (MLC) and 2 regulatory light chain subunits (MLC-2). As to expression, highest levels in lung, kidney, brain and colon, very low levels in liver and bladder and no expression in spleen or seminal vesicle (at protein level). Isoform 1 is expressed in liver, kidney and testis with low levels in skeletal muscle and heart. Isoform 1 and isoform 2 are expressed in brain and lung. Isoform 2 is the main isoform expressed in skeletal muscle and heart. Isoform 3 is limited to brain stem, cerebellum and spinal cord.

In terms of biological role, cellular myosin that appears to play a role in cytokinesis, cell shape, and specialized functions such as secretion and capping. The polypeptide is Myosin-14 (Myh14) (Mus musculus (Mouse)).